Here is a 692-residue protein sequence, read N- to C-terminus: Ribosome-releasing factor 2, mitochondrial (692 aa).

A mitochondrion-targeting transit peptide spans 1–29 (MLKYAWQSGPKQRNRWLWHLSNQIWKRSY). Residues 31 to 310 (SKIRNIGILA…AVNAYLPAPE (280 aa)) form the tr-type G domain. Residues 40 to 47 (AHIDAGKT), 104 to 108 (DTPGH), and 158 to 161 (NKMD) each bind GTP.

This sequence belongs to the TRAFAC class translation factor GTPase superfamily. Classic translation factor GTPase family. EF-G/EF-2 subfamily.

The protein localises to the mitochondrion. In terms of biological role, mitochondrial GTPase that mediates the disassembly of ribosomes from messenger RNA at the termination of mitochondrial protein biosynthesis. Not involved in the GTP-dependent ribosomal translocation step during translation elongation. The chain is Ribosome-releasing factor 2, mitochondrial from Drosophila sechellia (Fruit fly).